Reading from the N-terminus, the 368-residue chain is Glutamyl-tRNA reductase (368 aa).

Substrate is bound by residues 43 to 46, Ser-89, 94 to 96, and Gln-100; these read TCHR and EHQ. The Nucleophile role is filled by Cys-44. 164–169 contacts NADP(+); it reads GTGMMG.

It belongs to the glutamyl-tRNA reductase family. In terms of assembly, homodimer.

The enzyme catalyses (S)-4-amino-5-oxopentanoate + tRNA(Glu) + NADP(+) = L-glutamyl-tRNA(Glu) + NADPH + H(+). It functions in the pathway porphyrin-containing compound metabolism; protoporphyrin-IX biosynthesis; 5-aminolevulinate from L-glutamyl-tRNA(Glu): step 1/2. Its function is as follows. Catalyzes the NADPH-dependent reduction of glutamyl-tRNA(Glu) to glutamate 1-semialdehyde (GSA). In Thermosipho melanesiensis (strain DSM 12029 / CIP 104789 / BI429), this protein is Glutamyl-tRNA reductase.